The primary structure comprises 176 residues: Adenine phosphoribosyltransferase (176 aa).

This sequence belongs to the purine/pyrimidine phosphoribosyltransferase family. Homodimer.

The protein resides in the cytoplasm. It catalyses the reaction AMP + diphosphate = 5-phospho-alpha-D-ribose 1-diphosphate + adenine. The protein operates within purine metabolism; AMP biosynthesis via salvage pathway; AMP from adenine: step 1/1. Its function is as follows. Catalyzes a salvage reaction resulting in the formation of AMP, that is energically less costly than de novo synthesis. The sequence is that of Adenine phosphoribosyltransferase from Borreliella burgdorferi (strain ZS7) (Borrelia burgdorferi).